The sequence spans 277 residues: Tryptophan synthase alpha chain (277 aa).

Residues glutamate 42 and glutamate 53 each act as proton acceptor in the active site.

The protein belongs to the TrpA family. Tetramer of two alpha and two beta chains.

The enzyme catalyses (1S,2R)-1-C-(indol-3-yl)glycerol 3-phosphate + L-serine = D-glyceraldehyde 3-phosphate + L-tryptophan + H2O. It functions in the pathway amino-acid biosynthesis; L-tryptophan biosynthesis; L-tryptophan from chorismate: step 5/5. The alpha subunit is responsible for the aldol cleavage of indoleglycerol phosphate to indole and glyceraldehyde 3-phosphate. The sequence is that of Tryptophan synthase alpha chain from Natronomonas pharaonis (strain ATCC 35678 / DSM 2160 / CIP 103997 / JCM 8858 / NBRC 14720 / NCIMB 2260 / Gabara) (Halobacterium pharaonis).